The chain runs to 341 residues: uncharacterized protein (341 aa).

A run of 4 helical transmembrane segments spans residues 8–28, 63–83, 171–191, and 317–337; these read LMLT…PLII, LMYF…VFAL, IYIM…IALS, and EFLV…KIFL. One can recognise a VWFA domain in the interval 101-305; the sequence is DIVIVLDISP…SKKENLERKI (205 aa).

The protein resides in the cell membrane. This is an uncharacterized protein from Borreliella burgdorferi (strain ATCC 35210 / DSM 4680 / CIP 102532 / B31) (Borrelia burgdorferi).